Reading from the N-terminus, the 431-residue chain is Enolase (431 aa).

Gln-167 is a (2R)-2-phosphoglycerate binding site. Glu-209 (proton donor) is an active-site residue. Mg(2+)-binding residues include Asp-246, Glu-290, and Asp-317. Residues Lys-342, Arg-371, Ser-372, and Lys-393 each coordinate (2R)-2-phosphoglycerate. Lys-342 acts as the Proton acceptor in catalysis.

This sequence belongs to the enolase family. As to quaternary structure, component of the RNA degradosome, a multiprotein complex involved in RNA processing and mRNA degradation. It depends on Mg(2+) as a cofactor.

The protein resides in the cytoplasm. It is found in the secreted. Its subcellular location is the cell surface. The enzyme catalyses (2R)-2-phosphoglycerate = phosphoenolpyruvate + H2O. It functions in the pathway carbohydrate degradation; glycolysis; pyruvate from D-glyceraldehyde 3-phosphate: step 4/5. Functionally, catalyzes the reversible conversion of 2-phosphoglycerate (2-PG) into phosphoenolpyruvate (PEP). It is essential for the degradation of carbohydrates via glycolysis. This chain is Enolase, found in Erwinia tasmaniensis (strain DSM 17950 / CFBP 7177 / CIP 109463 / NCPPB 4357 / Et1/99).